A 388-amino-acid chain; its full sequence is tRNA (guanine(26)-N(2))-dimethyltransferase (388 aa).

Residues 4 to 383 form the Trm1 methyltransferase domain; that stretch reads RTIVEGTTKI…APIAEIKKII (380 aa). The S-adenosyl-L-methionine site is built by arginine 41, arginine 78, aspartate 94, and alanine 123. Positions 251, 254, 271, and 274 each coordinate Zn(2+).

This sequence belongs to the class I-like SAM-binding methyltransferase superfamily. Trm1 family.

The enzyme catalyses guanosine(26) in tRNA + 2 S-adenosyl-L-methionine = N(2)-dimethylguanosine(26) in tRNA + 2 S-adenosyl-L-homocysteine + 2 H(+). Dimethylates a single guanine residue at position 26 of a number of tRNAs using S-adenosyl-L-methionine as donor of the methyl groups. The chain is tRNA (guanine(26)-N(2))-dimethyltransferase from Methanosarcina mazei (strain ATCC BAA-159 / DSM 3647 / Goe1 / Go1 / JCM 11833 / OCM 88) (Methanosarcina frisia).